A 517-amino-acid polypeptide reads, in one-letter code: Cytochrome P450 monooxygenase sdnE (517 aa).

A helical transmembrane segment spans residues 4–24; the sequence is SSILQTLAVLYVLYLLGLIIY. Residue asparagine 111 is glycosylated (N-linked (GlcNAc...) asparagine). A helical membrane pass occupies residues 219-239; the sequence is FPVVFIILGLSPRAMLKLVVP. Residue cysteine 456 participates in heme binding.

It belongs to the cytochrome P450 family. It depends on heme as a cofactor.

It localises to the membrane. It functions in the pathway antibiotic biosynthesis. Functionally, cytochrome P450 monooxygenase; part of the gene cluster that mediates the biosynthesis of sordarin and hypoxysordarin, glycoside antibiotics with a unique tetracyclic diterpene aglycone structure. First, the geranylgeranyl diphosphate synthase sdnC constructs GGDP from farnesyl diphosphate and isopentenyl diphosphate. The diterpene cyclase sdnA then catalyzes the cyclization of GGDP to afford cycloaraneosene. Cycloaraneosene is then hydroxylated four times by the putative cytochrome P450 monooxygenases sdnB, sdnE, sdnF and sdnH to give a hydroxylated cycloaraneosene derivative such as cycloaraneosene-8,9,13,19-tetraol. Although the order of the hydroxylations is unclear, at least C8, C9 and C13 of the cycloaraneosene skeleton are hydroxylated before the sordaricin formation. Dehydration of the 13-hydroxy group of the hydroxylated cycloaraneosene derivative might be catalyzed by an unassigned hypothetical protein such as sdnG and sdnP to construct the cyclopentadiene moiety. The FAD-dependent oxidoreductase sdnN is proposed to catalyze the oxidation at C9 of the hydroxylated cycloaraneosene derivative and also catalyze the Baeyer-Villiger oxidation to give the lactone intermediate. The presumed lactone intermediate would be hydrolyzed to give an acrolein moiety and a carboxylate moiety. Then, [4+2]cycloaddition would occur between the acrolein moiety and the cyclopentadiene moiety to give sordaricin. SdnN might also be involved in the [4+2]cycloaddition after the hypothesized oxidation to accommodate the oxidized product and prompt the [4+2]cycloaddition. GDP-6-deoxy-D-altrose may be biosynthesized from GDP-D-mannose by the putative GDP-mannose-4,6-dehydratase sdnI and the short-chain dehydrogenase sdnK. The glycosyltransferase sdnJ catalyzes the attachment of 6-deoxy-D-altrose onto the 19-hydroxy group of sordaricin to give 4'-O-demethylsordarin. The methyltransferase sdnD would complete the biosynthesis of sordarin. Sordarin can be further modified into hypoxysordarin. The unique acyl chain at the 3'-hydroxy group of hypoxysordarin would be constructed by an iterative type I PKS sdnO and the trans-acting polyketide methyltransferase sdnL. SdnL would be responsible for the introduction of an alpha-methyl group of the polyketide chain. Alternatively, the beta-lactamase-like protein sdnR might be responsible for the cleavage and transfer of the polyketide chain from the PKS sdnO to sordarin. Two putative cytochrome P450 monooxygenases, sdnQ and sdnT, might catalyze the epoxidations of the polyketide chain to complete the biosynthesis of hypoxysordarin. Transcriptional regulators sdnM and sdnS are presumably encoded for the transcriptional regulation of the expression of the sdn gene cluster. In Sordaria araneosa (Pleurage araneosa), this protein is Cytochrome P450 monooxygenase sdnE.